The sequence spans 316 residues: GPI-specific phospholipase A2-like PGAP3 (316 aa).

The signal sequence occupies residues 1–19; sequence MFLAAAAFLLSAPASASQG. At 20–97 the chain is on the lumenal side; it reads DKEPVYRDCV…GKWPFARFLC (78 aa). The N-linked (GlcNAc...) asparagine glycan is linked to Asn36. Residues 98 to 118 form a helical membrane-spanning segment; that stretch reads FEEPASALASLLNGLACLLML. At 119–131 the chain is on the cytoplasmic side; sequence LRYRSAVPCQSPM. The chain crosses the membrane as a helical span at residues 132-152; sequence YHTITAFSLVSLNAWFWSTVF. At 153 to 165 the chain is on the lumenal side; it reads HTRDTYLTEKMDY. Residues 166 to 186 form a helical membrane-spanning segment; it reads FCASAVILYSIYLCCVRTLGL. Residues 187–194 are Cytoplasmic-facing; sequence RRPAISSM. A helical transmembrane segment spans residues 195–215; it reads VGVLLILAFTSHVSYLTFVSF. At 216-220 the chain is on the lumenal side; sequence DYGYN. A helical transmembrane segment spans residues 221–241; it reads MAANASIGIINLLWWLCWCWL. The Cytoplasmic segment spans residues 242–254; sequence NRRILPYWWRCGM. A helical membrane pass occupies residues 255–275; sequence VVLLLHGLALLELLDFPPLFW. Over 276 to 278 the chain is Lumenal; it reads VLD. The helical transmembrane segment at 279 to 299 threads the bilayer; it reads AHAVWHLSTVPVHFLFYSFLI. The Cytoplasmic segment spans residues 300-316; the sequence is DDSLHLLNTEKPGVKLD.

The protein belongs to the PGAP3 family.

It is found in the golgi apparatus membrane. Its function is as follows. Involved in the fatty acid remodeling steps of GPI-anchor maturation where the unsaturated acyl chain at sn-2 of inositol phosphate is replaced by a saturated stearoyl chain. May catalyze the first step of the fatty acid remodeling, by removing the unsaturated acyl chain at sn-2 of inositol phosphate, generating a lyso-GPI intermediate. The fatty acid remodeling steps is critical for the integration of GPI-APs into lipid rafts. This Danio rerio (Zebrafish) protein is GPI-specific phospholipase A2-like PGAP3.